The following is a 94-amino-acid chain: Ammonia regulation of amino acid uptake protein (94 aa).

2 repeats span residues 48–57 (HHQIRRRTHQ) and 58–67 (HHQIRRRTHQ).

In terms of biological role, involved in ammonia regulation of the GAP1 permease. This is Ammonia regulation of amino acid uptake protein (AUA1) from Saccharomyces cerevisiae (strain ATCC 204508 / S288c) (Baker's yeast).